The following is an 89-amino-acid chain: Large ribosomal subunit protein bL27 (89 aa).

The tract at residues 1–21 is disordered; the sequence is MAHKKAGGSSRNGRDSESKRL.

Belongs to the bacterial ribosomal protein bL27 family.

The polypeptide is Large ribosomal subunit protein bL27 (Bartonella quintana (strain Toulouse) (Rochalimaea quintana)).